We begin with the raw amino-acid sequence, 715 residues long: Inducible lysine decarboxylase (715 aa).

Residue lysine 367 is modified to N6-(pyridoxal phosphate)lysine.

It belongs to the Orn/Lys/Arg decarboxylase class-I family. In terms of assembly, homodecamer. Interacts with RavA. The cofactor is pyridoxal 5'-phosphate.

The protein localises to the cytoplasm. The catalysed reaction is L-lysine + H(+) = cadaverine + CO2. The protein is Inducible lysine decarboxylase (cadA) of Escherichia coli O157:H7.